We begin with the raw amino-acid sequence, 884 residues long: Schlafen family member 5 (884 aa).

574 to 581 (GLPGSGKT) is an ATP binding site.

Belongs to the Schlafen family. Subgroup III subfamily.

In terms of biological role, may have a role in hematopoietic cell differentiation. The polypeptide is Schlafen family member 5 (Slfn5) (Mus musculus (Mouse)).